The primary structure comprises 86 residues: Large ribosomal subunit protein bL28 (86 aa).

It belongs to the bacterial ribosomal protein bL28 family.

This is Large ribosomal subunit protein bL28 from Bacteroides fragilis (strain ATCC 25285 / DSM 2151 / CCUG 4856 / JCM 11019 / LMG 10263 / NCTC 9343 / Onslow / VPI 2553 / EN-2).